A 692-amino-acid chain; its full sequence is Elongation factor G (692 aa).

The region spanning 8-282 (EKTRNIGIMA…AVVEYMPAPT (275 aa)) is the tr-type G domain. GTP contacts are provided by residues 17 to 24 (AHIDAGKT), 81 to 85 (DTPGH), and 135 to 138 (NKMD). The tract at residues 285–304 (PNIKGVHPETGEADERHSSD) is disordered. Residues 290–304 (VHPETGEADERHSSD) show a composition bias toward basic and acidic residues.

It belongs to the TRAFAC class translation factor GTPase superfamily. Classic translation factor GTPase family. EF-G/EF-2 subfamily.

The protein localises to the cytoplasm. Catalyzes the GTP-dependent ribosomal translocation step during translation elongation. During this step, the ribosome changes from the pre-translocational (PRE) to the post-translocational (POST) state as the newly formed A-site-bound peptidyl-tRNA and P-site-bound deacylated tRNA move to the P and E sites, respectively. Catalyzes the coordinated movement of the two tRNA molecules, the mRNA and conformational changes in the ribosome. This chain is Elongation factor G, found in Desulfitobacterium hafniense (strain DSM 10664 / DCB-2).